A 642-amino-acid polypeptide reads, in one-letter code: Medium-chain-fatty-acid--[acyl-carrier-protein] ligase TtuA (642 aa).

This sequence belongs to the ATP-dependent AMP-binding enzyme family.

It catalyses the reaction a medium-chain fatty acid + holo-[ACP] + ATP = a medium-chain fatty acyl-[ACP] + AMP + diphosphate. The catalysed reaction is a medium-chain fatty acid + ATP + H(+) = a medium-chain fatty acyl-AMP + diphosphate. The enzyme catalyses a medium-chain fatty acyl-AMP + holo-[ACP] = a medium-chain fatty acyl-[ACP] + AMP + H(+). It carries out the reaction decanoate + holo-[ACP] + ATP = decanoyl-[ACP] + AMP + diphosphate. It catalyses the reaction decanoate + ATP + H(+) = decanoyl-AMP + diphosphate. The catalysed reaction is decanoyl-AMP + holo-[ACP] = decanoyl-[ACP] + AMP + H(+). Its function is as follows. Ligase likely involved in the biosynthesis of a polyyne metabolite. Catalyzes the activation of decanoic acid, followed by the loading of the activated decanoic acid onto the acyl carrier protein TtuC. Decanoic acid is the preferred substrate, but it can also use 10-undecenoic acid and lauric acid. Nonanoic acid and 7-octenoic acid are only weakly activated. The protein is Medium-chain-fatty-acid--[acyl-carrier-protein] ligase TtuA of Teredinibacter turnerae (strain ATCC 39867 / T7901).